A 662-amino-acid chain; its full sequence is DNA topoisomerase 4 subunit B (662 aa).

ATP is bound by residues Tyr20, Asn60, Asp87, Gly129–Ile135, and Lys359. The Toprim domain occupies Thr439–Pro553. The Mg(2+) site is built by Glu445, Asp518, and Asp520.

It belongs to the type II topoisomerase family. ParE type 1 subfamily. In terms of assembly, heterotetramer composed of ParC and ParE. It depends on Mg(2+) as a cofactor. Mn(2+) serves as cofactor. Requires Ca(2+) as cofactor.

The catalysed reaction is ATP-dependent breakage, passage and rejoining of double-stranded DNA.. In terms of biological role, topoisomerase IV is essential for chromosome segregation. It relaxes supercoiled DNA. Performs the decatenation events required during the replication of a circular DNA molecule. The polypeptide is DNA topoisomerase 4 subunit B (Rickettsia conorii (strain ATCC VR-613 / Malish 7)).